A 211-amino-acid polypeptide reads, in one-letter code: MANSGLQLLGFSMAMLGWVGLIASTAIPQWQMSSYAGDNIITAQAMYKGLWMECVTQSTGMMSCKMYDSVLALPAATQATRALMIVSLVLGFLAMFVATMGMKCTRCGGDDKVKKARIAMTGGIIFIVAGLAALVACSWIGHQIVTDFYNPLTPMNIKYEFGPAIFIGWAGSALVLLGGALLSCSCPGSESKAAYRAPRSYPKSNSSKEYV.

Residues 1 to 7 are Cytoplasmic-facing; that stretch reads MANSGLQ. The helical transmembrane segment at 8–28 threads the bilayer; sequence LLGFSMAMLGWVGLIASTAIP. Residues 29–81 are Extracellular-facing; that stretch reads QWQMSSYAGDNIITAQAMYKGLWMECVTQSTGMMSCKMYDSVLALPAATQATR. The chain crosses the membrane as a helical span at residues 82 to 102; it reads ALMIVSLVLGFLAMFVATMGM. The Cytoplasmic portion of the chain corresponds to 103–119; that stretch reads KCTRCGGDDKVKKARIA. The chain crosses the membrane as a helical span at residues 120–140; the sequence is MTGGIIFIVAGLAALVACSWI. Topologically, residues 141 to 160 are extracellular; that stretch reads GHQIVTDFYNPLTPMNIKYE. The chain crosses the membrane as a helical span at residues 161–181; it reads FGPAIFIGWAGSALVLLGGAL. The Cytoplasmic portion of the chain corresponds to 182–211; that stretch reads LSCSCPGSESKAAYRAPRSYPKSNSSKEYV. The segment at 210 to 211 is interactions with TJP1, TJP2 and TJP3; the sequence is YV.

The protein belongs to the claudin family. Directly interacts with TJP1/ZO-1, TJP2/ZO-2 and TJP3/ZO-3. The phosphorylated form interacts with EPCAM. Phosphorylated.

It is found in the cell membrane. The protein resides in the basolateral cell membrane. The protein localises to the cell junction. It localises to the tight junction. Functionally, plays a major role in tight junction-specific obliteration of the intercellular space. The polypeptide is Claudin-7 (Cldn7) (Rattus norvegicus (Rat)).